The sequence spans 379 residues: Sulfate adenylyltransferase (379 aa).

This sequence belongs to the sulfate adenylyltransferase family.

It catalyses the reaction sulfate + ATP + H(+) = adenosine 5'-phosphosulfate + diphosphate. Its pathway is sulfur metabolism; hydrogen sulfide biosynthesis; sulfite from sulfate: step 1/3. This Cenarchaeum symbiosum (strain A) protein is Sulfate adenylyltransferase.